Reading from the N-terminus, the 363-residue chain is Somatostatin receptor type 5 (363 aa).

Over 1–35 (MEPLSLASTPSWNASAASSGNHNWSLVGSASPMGA) the chain is Extracellular. N-linked (GlcNAc...) asparagine glycosylation is found at asparagine 13 and asparagine 23. The helical transmembrane segment at 36–63 (RAVLVPVLYLLVCTVGLSGNTLVIYVVL) threads the bilayer. The Cytoplasmic segment spans residues 64–73 (RHAKMKTVTN). Residues 74-99 (VYILNLAVADVLFMLGLPFLATQNAV) form a helical membrane-spanning segment. At 100 to 111 (VSYWPFGSFLCR) the chain is on the extracellular side. The cysteines at positions 110 and 185 are disulfide-linked. A helical transmembrane segment spans residues 112–133 (LVMTLDGINQFTSIFCLMVMSV). The Cytoplasmic portion of the chain corresponds to 134 to 155 (DRYLAVVHPLRSARWRRPRVAK). A helical transmembrane segment spans residues 156–176 (MASAAVWVFSLLMSLPLLVFA). Over 177–196 (DVQEGWGTCNLSWPEPVGLW) the chain is Extracellular. A glycan (N-linked (GlcNAc...) asparagine) is linked at asparagine 186. The helical transmembrane segment at 197–221 (GAAFITYTSVLGFFGPLLVICLCYL) threads the bilayer. Residues 222–247 (LIVVKVKAAGMRVGSSRRRRSEPKVT) lie on the Cytoplasmic side of the membrane. A helical transmembrane segment spans residues 248-273 (RMVVVVVLVFVGCWLPFFIVNIVNLA). Residues 274–283 (FTLPEEPTSA) lie on the Extracellular side of the membrane. The chain crosses the membrane as a helical span at residues 284–308 (GLYFFVVVLSYANSCANPLLYGFLS). The Cytoplasmic segment spans residues 309-363 (DNFRQSFRKVLCLRRGYGMEDADAIEPRPDKSGRPQATLPTRSCEANGLMQTSRI). Cysteine 320 carries S-palmitoyl cysteine; by ZDHHC5 lipidation. The tract at residues 331–363 (DAIEPRPDKSGRPQATLPTRSCEANGLMQTSRI) is disordered.

This sequence belongs to the G-protein coupled receptor 1 family. Heterodimer with SSTR2. Heterodimerization with SSTR2 increases cell growth inhibition activity of SSTR2. Post-translationally, palmitoylated at Cys-320 by ZDHHC5, but not ZDHHC8. Palmitoylation creates an additional intracellular loop which is thought to be important for efficient coupling to G-proteins and may target the protein to lipid rafts. Prominent in the pituitary and small intestine. Low levels in islets and spleen. Not detected in kidney, pancreas, cerebellum, or cortex.

Its subcellular location is the cell membrane. Receptor for somatostatin-28. The activity of this receptor is mediated by G proteins which inhibit adenylyl cyclase. Increases cell growth inhibition activity of SSTR2 following heterodimerization. This is Somatostatin receptor type 5 (Sstr5) from Rattus norvegicus (Rat).